Consider the following 558-residue polypeptide: Coiled-coil domain-containing protein 63 (558 aa).

The tract at residues 1 to 26 is disordered; sequence MPTKKHRRKDPESPQEPSEKTKEQLV. Residues 9 to 26 are compositionally biased toward basic and acidic residues; the sequence is KDPESPQEPSEKTKEQLV. Coiled coils occupy residues 48–289 and 339–416; these read NFRS…KAKK and VTEL…VENL. Positions 531-558 are disordered; sequence HYATRESRNRDSMPEKGDELKSKKKVTV. Positions 533–551 are enriched in basic and acidic residues; sequence ATRESRNRDSMPEKGDELK.

Plays a role in spermiogenesis. Involved in the elongation of flagella and the formation of sperm heads. This Bos taurus (Bovine) protein is Coiled-coil domain-containing protein 63.